The primary structure comprises 610 residues: Tyrosine-protein kinase Drl (610 aa).

The signal sequence occupies residues 1 to 20 (MAPNLLTIGLLLTLIASGQA). The Extracellular portion of the chain corresponds to 21 to 242 (HLNIFLNLHE…RENLVPPASG (222 aa)). The WIF domain occupies 24 to 155 (IFLNLHEVLR…NLIFKRKKIC (132 aa)). N-linked (GlcNAc...) asparagine glycosylation is found at Asn-63, Asn-99, and Asn-143. The tract at residues 202 to 230 (QAPEKQRPVVTESPVGRGNSGGSKRDFDP) is disordered. Residues 243–263 (LVTLIVGGILALVLVSTLILI) traverse the membrane as a helical segment. Residues 264-610 (AYCAKGPSKR…EFHTQITRYV (347 aa)) are Cytoplasmic-facing. Positions 343-606 (VRLSCLVQEG…ICLSEFHTQI (264 aa)) constitute a Protein kinase domain. ATP-binding positions include 349 to 357 (VQEGNFGRI) and Lys-371. The Proton acceptor role is filled by Asp-468. A Phosphotyrosine; by autocatalysis modification is found at Tyr-498.

Belongs to the protein kinase superfamily. Tyr protein kinase family. In terms of tissue distribution, in the embryonic abdominal hemisegment, expression is restricted to cell body, axon and growth cone of a cluster of 20 ventral nerve cord interneurons. During muscle growth and attachment events in the embryonic abdominal hemisegment, expression is in somatic muscle fibers 21-23 at 10-13 hours and 2 patches of approximately 15 neighboring epidermal cells (dorsal and ventral attachment sites) at 6-13 hours.

It localises to the cell membrane. The enzyme catalyses L-tyrosyl-[protein] + ATP = O-phospho-L-tyrosyl-[protein] + ADP + H(+). Its function is as follows. Probable coreceptor of Wnt proteins. Involved in neuronal pathway recognition and ventral muscle attachment site selection. Non-vital for development. May be part of a signal transduction cascade involved in learning and possibly memory. The protein is Tyrosine-protein kinase Drl (drl) of Drosophila melanogaster (Fruit fly).